Consider the following 271-residue polypeptide: 4-hydroxy-tetrahydrodipicolinate reductase (271 aa).

10-15 (GAAGRM) contacts NAD(+). NADP(+) is bound at residue Arg37. NAD(+) is bound by residues 100-102 (GTT) and 124-127 (SGNM). His157 (proton donor/acceptor) is an active-site residue. Residue His158 coordinates (S)-2,3,4,5-tetrahydrodipicolinate. The active-site Proton donor is Lys161. Residue 167-168 (GT) participates in (S)-2,3,4,5-tetrahydrodipicolinate binding. The disordered stretch occupies residues 183 to 202 (SLSEHEQRGRDGHTGPRKDG). Basic and acidic residues predominate over residues 185-202 (SEHEQRGRDGHTGPRKDG).

This sequence belongs to the DapB family.

It is found in the cytoplasm. The catalysed reaction is (S)-2,3,4,5-tetrahydrodipicolinate + NAD(+) + H2O = (2S,4S)-4-hydroxy-2,3,4,5-tetrahydrodipicolinate + NADH + H(+). The enzyme catalyses (S)-2,3,4,5-tetrahydrodipicolinate + NADP(+) + H2O = (2S,4S)-4-hydroxy-2,3,4,5-tetrahydrodipicolinate + NADPH + H(+). Its pathway is amino-acid biosynthesis; L-lysine biosynthesis via DAP pathway; (S)-tetrahydrodipicolinate from L-aspartate: step 4/4. Its function is as follows. Catalyzes the conversion of 4-hydroxy-tetrahydrodipicolinate (HTPA) to tetrahydrodipicolinate. In Beijerinckia indica subsp. indica (strain ATCC 9039 / DSM 1715 / NCIMB 8712), this protein is 4-hydroxy-tetrahydrodipicolinate reductase.